A 180-amino-acid polypeptide reads, in one-letter code: ATP synthase subunit delta, chloroplastic (180 aa).

This sequence belongs to the ATPase delta chain family. F-type ATPases have 2 components, F(1) - the catalytic core - and F(0) - the membrane proton channel. F(1) has five subunits: alpha(3), beta(3), gamma(1), delta(1), epsilon(1). CF(0) has four main subunits: a(1), b(1), b'(1) and c(10-14). The alpha and beta chains form an alternating ring which encloses part of the gamma chain. F(1) is attached to F(0) by a central stalk formed by the gamma and epsilon chains, while a peripheral stalk is formed by the delta, b and b' chains.

It localises to the plastid. The protein resides in the chloroplast thylakoid membrane. Functionally, f(1)F(0) ATP synthase produces ATP from ADP in the presence of a proton or sodium gradient. F-type ATPases consist of two structural domains, F(1) containing the extramembraneous catalytic core and F(0) containing the membrane proton channel, linked together by a central stalk and a peripheral stalk. During catalysis, ATP synthesis in the catalytic domain of F(1) is coupled via a rotary mechanism of the central stalk subunits to proton translocation. This protein is part of the stalk that links CF(0) to CF(1). It either transmits conformational changes from CF(0) to CF(1) or is implicated in proton conduction. The protein is ATP synthase subunit delta, chloroplastic of Emiliania huxleyi (Coccolithophore).